The primary structure comprises 282 residues: sn-glycerol-3-phosphate transport system permease protein UgpE (282 aa).

A run of 6 helical transmembrane segments spans residues 14–34, 86–106, 112–132, 146–168, 201–221, and 248–268; these read LILILGIIIVAFPIYYTFVAS, MAIAVGKIIISFMSAFAIVFF, MFFFWMIFITLMLPVEVRILP, YAGLTLPLMASATATFLFRQFFL, IAALFVILFIYGWTQYLWPLL, and WNYVMVTAILAIIPLILVVVL. One can recognise an ABC transmembrane type-1 domain in the interval 78–269; the sequence is LWNSFVVAMA…IPLILVVVLM (192 aa).

The protein belongs to the binding-protein-dependent transport system permease family. The complex is composed of two ATP-binding proteins (UgpC), two transmembrane proteins (UgpA and UgpE) and a solute-binding protein (UgpB).

It localises to the cell inner membrane. In terms of biological role, part of the ABC transporter complex UgpBAEC involved in sn-glycerol-3-phosphate (G3P) import. Probably responsible for the translocation of the substrate across the membrane. The protein is sn-glycerol-3-phosphate transport system permease protein UgpE (ugpE) of Brucella abortus (strain 2308).